We begin with the raw amino-acid sequence, 101 residues long: Small ribosomal subunit protein uS17 (101 aa).

It belongs to the universal ribosomal protein uS17 family. In terms of assembly, part of the 30S ribosomal subunit.

Functionally, one of the primary rRNA binding proteins, it binds specifically to the 5'-end of 16S ribosomal RNA. The sequence is that of Small ribosomal subunit protein uS17 from Koribacter versatilis (strain Ellin345).